Reading from the N-terminus, the 143-residue chain is Transcriptional regulator MraZ (143 aa).

2 SpoVT-AbrB domains span residues Glu5–Ala47 and Ala76–Lys119.

Belongs to the MraZ family. Forms oligomers.

It localises to the cytoplasm. It is found in the nucleoid. In Finegoldia magna (strain ATCC 29328 / DSM 20472 / WAL 2508) (Peptostreptococcus magnus), this protein is Transcriptional regulator MraZ.